Here is a 739-residue protein sequence, read N- to C-terminus: Catalase-peroxidase (739 aa).

The first 23 residues, 1–23, serve as a signal peptide directing secretion; that stretch reads MLKKIVTALGMSGMLLAANSAIA. Residues 100 to 221 constitute a cross-link (tryptophyl-tyrosyl-methioninium (Trp-Tyr) (with M-247)); sequence WHDAGTYRLA…YAATQMGLIY (122 aa). Histidine 101 acts as the Proton acceptor in catalysis. A cross-link (tryptophyl-tyrosyl-methioninium (Tyr-Met) (with W-100)) is located at residues 221–247; that stretch reads YVNPEGPDGKPDIKGAASEIRQAFRAM. Histidine 262 provides a ligand contact to heme b.

This sequence belongs to the peroxidase family. Peroxidase/catalase subfamily. Homodimer or homotetramer. Requires heme b as cofactor. Post-translationally, formation of the three residue Trp-Tyr-Met cross-link is important for the catalase, but not the peroxidase activity of the enzyme.

The catalysed reaction is H2O2 + AH2 = A + 2 H2O. It catalyses the reaction 2 H2O2 = O2 + 2 H2O. In terms of biological role, bifunctional enzyme with both catalase and broad-spectrum peroxidase activity. The sequence is that of Catalase-peroxidase from Francisella philomiragia subsp. philomiragia (strain ATCC 25017 / CCUG 19701 / FSC 153 / O#319-036).